Reading from the N-terminus, the 374-residue chain is tRNA-specific 2-thiouridylase MnmA (374 aa).

Residues 15-22 (GMSGGVDS) and methionine 41 contribute to the ATP site. The interaction with target base in tRNA stretch occupies residues 101–103 (NPD). Residue cysteine 106 is the Nucleophile of the active site. Cysteine 106 and cysteine 203 are oxidised to a cystine. Glycine 130 serves as a coordination point for ATP. The interaction with tRNA stretch occupies residues 153-155 (KDQ). The active-site Cysteine persulfide intermediate is cysteine 203. Positions 311–312 (RY) are interaction with tRNA.

This sequence belongs to the MnmA/TRMU family.

The protein resides in the cytoplasm. It carries out the reaction S-sulfanyl-L-cysteinyl-[protein] + uridine(34) in tRNA + AH2 + ATP = 2-thiouridine(34) in tRNA + L-cysteinyl-[protein] + A + AMP + diphosphate + H(+). Catalyzes the 2-thiolation of uridine at the wobble position (U34) of tRNA, leading to the formation of s(2)U34. The protein is tRNA-specific 2-thiouridylase MnmA of Lysinibacillus sphaericus (strain C3-41).